Here is a 484-residue protein sequence, read N- to C-terminus: tRNA sulfurtransferase (484 aa).

A THUMP domain is found at 63–167 (REMIERLTCT…LDRLFVIHRQ (105 aa)). ATP is bound by residues 185-186 (LM), K267, G289, and Q298. C346 and C457 are oxidised to a cystine. One can recognise a Rhodanese domain in the interval 405-483 (VLPGQIVIDI…GHTNVRVYRP (79 aa)). C457 acts as the Cysteine persulfide intermediate in catalysis.

The protein belongs to the ThiI family.

It is found in the cytoplasm. The enzyme catalyses [ThiI sulfur-carrier protein]-S-sulfanyl-L-cysteine + a uridine in tRNA + 2 reduced [2Fe-2S]-[ferredoxin] + ATP + H(+) = [ThiI sulfur-carrier protein]-L-cysteine + a 4-thiouridine in tRNA + 2 oxidized [2Fe-2S]-[ferredoxin] + AMP + diphosphate. It catalyses the reaction [ThiS sulfur-carrier protein]-C-terminal Gly-Gly-AMP + S-sulfanyl-L-cysteinyl-[cysteine desulfurase] + AH2 = [ThiS sulfur-carrier protein]-C-terminal-Gly-aminoethanethioate + L-cysteinyl-[cysteine desulfurase] + A + AMP + 2 H(+). Its pathway is cofactor biosynthesis; thiamine diphosphate biosynthesis. Its function is as follows. Catalyzes the ATP-dependent transfer of a sulfur to tRNA to produce 4-thiouridine in position 8 of tRNAs, which functions as a near-UV photosensor. Also catalyzes the transfer of sulfur to the sulfur carrier protein ThiS, forming ThiS-thiocarboxylate. This is a step in the synthesis of thiazole, in the thiamine biosynthesis pathway. The sulfur is donated as persulfide by IscS. The polypeptide is tRNA sulfurtransferase (Pseudomonas aeruginosa (strain LESB58)).